We begin with the raw amino-acid sequence, 1740 residues long: DNA polymerase (1740 aa).

The disordered stretch occupies residues 472-491 (IEMPHNQEDSDSEKEDEDTD). Residues 480–491 (DSDSEKEDEDTD) show a composition bias toward acidic residues. Residues 1189–1334 (VWGFFMGDGS…LFYLLKSLGY (146 aa)) enclose the DOD-type homing endonuclease domain. The interval 1673–1701 (PKESGSKTAKKPYQSQKLQKTKSSNKSQI) is disordered. Residues 1685–1700 (YQSQKLQKTKSSNKSQ) show a composition bias toward polar residues.

It belongs to the DNA polymerase type-B family. In terms of processing, this protein undergoes a protein self splicing that involves a post-translational excision of the intervening region (intein) followed by peptide ligation.

It catalyses the reaction DNA(n) + a 2'-deoxyribonucleoside 5'-triphosphate = DNA(n+1) + diphosphate. The sequence is that of DNA polymerase (POLB) from Acanthamoeba polyphaga (Amoeba).